The primary structure comprises 112 residues: Reprimo-like protein (112 aa).

A helical membrane pass occupies residues 59–79 (VVQIAVLCVLSLTVLFGIFFL).

The protein belongs to the reprimo family.

It localises to the membrane. This chain is Reprimo-like protein (rprml), found in Xenopus laevis (African clawed frog).